The chain runs to 553 residues: Formate--tetrahydrofolate ligase 2 (553 aa).

Residue T63–S70 coordinates ATP.

This sequence belongs to the formate--tetrahydrofolate ligase family.

The enzyme catalyses (6S)-5,6,7,8-tetrahydrofolate + formate + ATP = (6R)-10-formyltetrahydrofolate + ADP + phosphate. Its pathway is one-carbon metabolism; tetrahydrofolate interconversion. This Lactobacillus acidophilus (strain ATCC 700396 / NCK56 / N2 / NCFM) protein is Formate--tetrahydrofolate ligase 2.